Consider the following 325-residue polypeptide: Coiled-coil domain-containing protein 160 (325 aa).

2 disordered regions span residues 18–45 and 81–123; these read SAQDVLEETSEPESSSEQTTADSSKGME and ENKR…CSTD. Residues 81-91 are compositionally biased toward basic and acidic residues; that stretch reads ENKRNISKNET. A compositionally biased stretch (polar residues) spans 92–123; it reads DTNSASYESSNVDVTTEESFNSTEDNSTCSTD. The stretch at 144-288 forms a coiled coil; sequence KLCLNLLNEE…SVIKNELRTE (145 aa).

It belongs to the CCDC160 family.

The chain is Coiled-coil domain-containing protein 160 (CCDC160) from Homo sapiens (Human).